We begin with the raw amino-acid sequence, 664 residues long: DNA ligase (664 aa).

NAD(+)-binding positions include 32–36 (DKEYD) and 80–81 (SL). The N6-AMP-lysine intermediate role is filled by K122. R144, E178, and K314 together coordinate NAD(+). 4 residues coordinate Zn(2+): C407, C410, C423, and C429. The region spanning 587-664 (IDENPFMDKT…NEEEFSNKIK (78 aa)) is the BRCT domain.

This sequence belongs to the NAD-dependent DNA ligase family. LigA subfamily. The cofactor is Mg(2+). Mn(2+) is required as a cofactor.

The catalysed reaction is NAD(+) + (deoxyribonucleotide)n-3'-hydroxyl + 5'-phospho-(deoxyribonucleotide)m = (deoxyribonucleotide)n+m + AMP + beta-nicotinamide D-nucleotide.. Functionally, DNA ligase that catalyzes the formation of phosphodiester linkages between 5'-phosphoryl and 3'-hydroxyl groups in double-stranded DNA using NAD as a coenzyme and as the energy source for the reaction. It is essential for DNA replication and repair of damaged DNA. The polypeptide is DNA ligase (Clostridium botulinum (strain Okra / Type B1)).